The chain runs to 1076 residues: JmjC domain-containing histone demethylation protein 1 (1076 aa).

The 173-residue stretch at phenylalanine 93–asparagine 265 folds into the JmjC domain. Residue threonine 159 participates in substrate binding. Residues histidine 162 and aspartate 164 each coordinate Fe cation. Position 179 (lysine 179) interacts with substrate. A Fe cation-binding site is contributed by histidine 233. 2 disordered regions span residues phenylalanine 598–valine 748 and lysine 789–serine 1056. A compositionally biased stretch (acidic residues) spans aspartate 610–alanine 634. Residues alanine 653–arginine 680 are compositionally biased toward basic and acidic residues. Residues arginine 681 to glutamate 698 show a composition bias toward basic residues. Basic and acidic residues-rich tracts occupy residues arginine 699–alanine 714 and lysine 789–histidine 811. The span at alanine 935–serine 946 shows a compositional bias: low complexity. Polar residues-rich tracts occupy residues phenylalanine 957–arginine 990 and aspartate 1004–threonine 1019. Positions glutamine 1044–serine 1056 are enriched in basic and acidic residues.

It belongs to the JHDM1 histone demethylase family. The cofactor is Fe(2+).

The protein resides in the nucleus. The enzyme catalyses N(6),N(6)-dimethyl-L-lysyl(36)-[histone H3] + 2 2-oxoglutarate + 2 O2 = L-lysyl(36)-[histone H3] + 2 formaldehyde + 2 succinate + 2 CO2. Its function is as follows. Histone demethylase that specifically demethylates 'Lys-36' of histone H3, thereby playing a central role in histone code. Has a role in regulating lifespan. The protein is JmjC domain-containing histone demethylation protein 1 (jhdm-1) of Caenorhabditis elegans.